We begin with the raw amino-acid sequence, 624 residues long: Chaperone protein HtpG (624 aa).

Residues 1–336 (MSMKGQETRG…SNDLPLNVSR (336 aa)) are a; substrate-binding. A b region spans residues 337 to 552 (EILQDSRVTQ…ADEMSTQMAK (216 aa)). Residues 553-624 (LFAAAGQQAP…IRRMNQLLTA (72 aa)) are c.

Belongs to the heat shock protein 90 family. In terms of assembly, homodimer.

It localises to the cytoplasm. Its function is as follows. Molecular chaperone. Has ATPase activity. This chain is Chaperone protein HtpG, found in Yersinia enterocolitica serotype O:8 / biotype 1B (strain NCTC 13174 / 8081).